Here is a 249-residue protein sequence, read N- to C-terminus: Ribonuclease PH (249 aa).

Residues arginine 86 and 124–126 (GTR) contribute to the phosphate site.

The protein belongs to the RNase PH family. In terms of assembly, homohexameric ring arranged as a trimer of dimers.

The enzyme catalyses tRNA(n+1) + phosphate = tRNA(n) + a ribonucleoside 5'-diphosphate. Phosphorolytic 3'-5' exoribonuclease that plays an important role in tRNA 3'-end maturation. Removes nucleotide residues following the 3'-CCA terminus of tRNAs; can also add nucleotides to the ends of RNA molecules by using nucleoside diphosphates as substrates, but this may not be physiologically important. Probably plays a role in initiation of 16S rRNA degradation (leading to ribosome degradation) during starvation. The polypeptide is Ribonuclease PH (Clostridium botulinum (strain Eklund 17B / Type B)).